Reading from the N-terminus, the 262-residue chain is Tryptophan synthase alpha chain (262 aa).

Catalysis depends on proton acceptor residues Glu-51 and Asp-62.

This sequence belongs to the TrpA family. Tetramer of two alpha and two beta chains.

It carries out the reaction (1S,2R)-1-C-(indol-3-yl)glycerol 3-phosphate + L-serine = D-glyceraldehyde 3-phosphate + L-tryptophan + H2O. It functions in the pathway amino-acid biosynthesis; L-tryptophan biosynthesis; L-tryptophan from chorismate: step 5/5. The alpha subunit is responsible for the aldol cleavage of indoleglycerol phosphate to indole and glyceraldehyde 3-phosphate. This Oceanobacillus iheyensis (strain DSM 14371 / CIP 107618 / JCM 11309 / KCTC 3954 / HTE831) protein is Tryptophan synthase alpha chain.